The following is a 353-amino-acid chain: Nicotinate-nucleotide--dimethylbenzimidazole phosphoribosyltransferase (353 aa).

Catalysis depends on Glu-319, which acts as the Proton acceptor.

It belongs to the CobT family.

The enzyme catalyses 5,6-dimethylbenzimidazole + nicotinate beta-D-ribonucleotide = alpha-ribazole 5'-phosphate + nicotinate + H(+). Its pathway is nucleoside biosynthesis; alpha-ribazole biosynthesis; alpha-ribazole from 5,6-dimethylbenzimidazole: step 1/2. Functionally, catalyzes the synthesis of alpha-ribazole-5'-phosphate from nicotinate mononucleotide (NAMN) and 5,6-dimethylbenzimidazole (DMB). This is Nicotinate-nucleotide--dimethylbenzimidazole phosphoribosyltransferase from Syntrophobacter fumaroxidans (strain DSM 10017 / MPOB).